A 458-amino-acid polypeptide reads, in one-letter code: Argininosuccinate lyase (458 aa).

Belongs to the lyase 1 family. Argininosuccinate lyase subfamily.

Its subcellular location is the cytoplasm. It carries out the reaction 2-(N(omega)-L-arginino)succinate = fumarate + L-arginine. It participates in amino-acid biosynthesis; L-arginine biosynthesis; L-arginine from L-ornithine and carbamoyl phosphate: step 3/3. This is Argininosuccinate lyase from Lachnospira eligens (strain ATCC 27750 / DSM 3376 / VPI C15-48 / C15-B4) (Eubacterium eligens).